The following is a 188-amino-acid chain: Probable chemoreceptor glutamine deamidase CheD (188 aa).

The protein belongs to the CheD family.

It catalyses the reaction L-glutaminyl-[protein] + H2O = L-glutamyl-[protein] + NH4(+). In terms of biological role, probably deamidates glutamine residues to glutamate on methyl-accepting chemotaxis receptors (MCPs), playing an important role in chemotaxis. In Caulobacter sp. (strain K31), this protein is Probable chemoreceptor glutamine deamidase CheD.